Here is a 248-residue protein sequence, read N- to C-terminus: 23S rRNA (guanosine-2'-O-)-methyltransferase RlmB (248 aa).

Gly-198, Leu-218, and Leu-227 together coordinate S-adenosyl-L-methionine.

This sequence belongs to the class IV-like SAM-binding methyltransferase superfamily. RNA methyltransferase TrmH family. RlmB subfamily.

Its subcellular location is the cytoplasm. It catalyses the reaction guanosine(2251) in 23S rRNA + S-adenosyl-L-methionine = 2'-O-methylguanosine(2251) in 23S rRNA + S-adenosyl-L-homocysteine + H(+). In terms of biological role, specifically methylates the ribose of guanosine 2251 in 23S rRNA. This Pseudomonas putida (strain ATCC 47054 / DSM 6125 / CFBP 8728 / NCIMB 11950 / KT2440) protein is 23S rRNA (guanosine-2'-O-)-methyltransferase RlmB.